The following is a 389-amino-acid chain: tRNA-specific 2-thiouridylase MnmA (389 aa).

ATP contacts are provided by residues 35-42 and Met-61; that span reads GMSGGVDS. The interaction with target base in tRNA stretch occupies residues 121 to 123; the sequence is NPD. The active-site Nucleophile is the Cys-126. A disulfide bridge links Cys-126 with Cys-223. Gly-151 lines the ATP pocket. The interval 173-175 is interaction with tRNA; sequence KDQ. The active-site Cysteine persulfide intermediate is Cys-223. The interval 335–336 is interaction with tRNA; the sequence is RY.

This sequence belongs to the MnmA/TRMU family.

It localises to the cytoplasm. It carries out the reaction S-sulfanyl-L-cysteinyl-[protein] + uridine(34) in tRNA + AH2 + ATP = 2-thiouridine(34) in tRNA + L-cysteinyl-[protein] + A + AMP + diphosphate + H(+). Functionally, catalyzes the 2-thiolation of uridine at the wobble position (U34) of tRNA, leading to the formation of s(2)U34. In Actinobacillus pleuropneumoniae serotype 3 (strain JL03), this protein is tRNA-specific 2-thiouridylase MnmA.